The following is a 147-amino-acid chain: Globin, major monomeric component (147 aa).

The region spanning 1–146 is the Globin domain; sequence GLSAAQRQVI…ISGALISGLQ (146 aa). H90 is a heme b binding site.

It belongs to the globin family. As to quaternary structure, monomer.

The protein is Globin, major monomeric component of Glycera dibranchiata (Bloodworm).